The sequence spans 575 residues: Kelch repeat and BTB domain-containing protein 8 (575 aa).

In terms of domain architecture, BTB spans 23–91; it reads TDIVVEVDHG…AYTSRVILTE (69 aa). One can recognise a BACK domain in the interval 126-228; it reads SIGVFIFADH…MEDAFIEKIP (103 aa). 5 Kelch repeats span residues 310–364, 365–415, 417–455, 457–506, and 516–562; these read DIYI…YCCG, KMYA…EHKE, IYVL…VYKD, IYYI…LFQN, and QVTV…FECA.

This sequence belongs to the KBTBD8 family. In terms of assembly, component of the BCR(KBTBD8) E3 ubiquitin ligase complex, at least composed of CUL3, KBTBD8 and RBX1.

Its subcellular location is the cytoplasm. The protein localises to the cytoskeleton. The protein resides in the spindle. It localises to the golgi apparatus. In terms of biological role, substrate-specific adapter of a BCR (BTB-CUL3-RBX1) E3 ubiquitin ligase complex that acts as a regulator of neural crest specification. The BCR(KBTBD8) complex acts by mediating monoubiquitination of NOLC1 and TCOF1: monoubiquitination promotes the formation of a NOLC1-TCOF1 complex that acts as a platform to connect RNA polymerase I with enzymes responsible for ribosomal processing and modification, leading to remodel the translational program of differentiating cells in favor of neural crest specification. The sequence is that of Kelch repeat and BTB domain-containing protein 8 from Rattus norvegicus (Rat).